The following is a 242-amino-acid chain: ATP-dependent dethiobiotin synthetase BioD (242 aa).

12–17 lines the ATP pocket; that stretch reads EVGKTV. Residue Thr-16 participates in Mg(2+) binding. Residue Lys-37 is part of the active site. Substrate is bound at residue Ser-41. ATP is bound by residues Asp-51 and 112–115; that span reads EGAG. Residues Asp-51 and Glu-112 each coordinate Mg(2+).

It belongs to the dethiobiotin synthetase family. Homodimer. The cofactor is Mg(2+).

It is found in the cytoplasm. The catalysed reaction is (7R,8S)-7,8-diammoniononanoate + CO2 + ATP = (4R,5S)-dethiobiotin + ADP + phosphate + 3 H(+). Its pathway is cofactor biosynthesis; biotin biosynthesis; biotin from 7,8-diaminononanoate: step 1/2. Its function is as follows. Catalyzes a mechanistically unusual reaction, the ATP-dependent insertion of CO2 between the N7 and N8 nitrogen atoms of 7,8-diaminopelargonic acid (DAPA, also called 7,8-diammoniononanoate) to form a ureido ring. The sequence is that of ATP-dependent dethiobiotin synthetase BioD from Bacillus cereus (strain B4264).